The sequence spans 499 residues: ADP,ATP carrier protein 5 (499 aa).

Transmembrane regions (helical) follow at residues L25 to L45, I61 to Y81, I93 to Y113, Y148 to W168, F183 to M203, I223 to L243, L286 to V306, L327 to M347, A356 to F376, I380 to G400, and L468 to V488.

The protein belongs to the ADP/ATP translocase tlc family.

It is found in the cell membrane. Its function is as follows. Provides the rickettsial cell with host ATP in exchange for rickettsial ADP. This is an obligate exchange system. This energy acquiring activity is an important component of rickettsial parasitism. This chain is ADP,ATP carrier protein 5 (tlcE), found in Rickettsia conorii (strain ATCC VR-613 / Malish 7).